Reading from the N-terminus, the 236-residue chain is Thioredoxin-like 2-2, chloroplastic (236 aa).

A chloroplast-targeting transit peptide spans 1–82 (MAGVVRLTTT…LRRPKSQVVR (82 aa)). In terms of domain architecture, Thioredoxin spans 83–220 (VKVDENVAET…QLELGITLQT (138 aa)). Residues cysteine 135 and cysteine 138 each act as nucleophile in the active site. A disulfide bridge links cysteine 135 with cysteine 138.

This sequence belongs to the thioredoxin family.

Its subcellular location is the plastid. It localises to the chloroplast. Thiol-disulfide oxidoreductase that may participate in various redox reactions. Possesses insulin disulfide bonds reducing activity. This is Thioredoxin-like 2-2, chloroplastic from Arabidopsis thaliana (Mouse-ear cress).